A 964-amino-acid polypeptide reads, in one-letter code: Siderophore exporter MmpL5 (964 aa).

12 helical membrane passes run 31-51, 203-223, 230-250, 255-275, 302-322, 340-360, 389-409, 773-793, 803-823, 826-846, 880-900, and 923-943; these read FAVPIILGWLVTIAVLNVTVP, SLQVIEAVTFTVIIVMLLLVY, AIMLTMVVLGLLATRGGVAFL, IIGLSTFATNLLVVLAIAAAT, MFGGTAHVVLGSGLTIAGATF, AIGMVIVVAAALTLGPAIIAV, WPGPILVGAVALALVGLLTLP, TYDLMIAGISALCLIFIIMLI, VIVGTVVLSLGASFGLSVLIW, ILGIELHWLVLAMAVIILLAV, VVTAAGLVFAFTMMSFAVSEL, and SFMTPSIAALLGKWFWWPQVV.

Belongs to the resistance-nodulation-cell division (RND) (TC 2.A.6) family. MmpL subfamily. Interacts with MmpS5.

The protein localises to the cell inner membrane. In terms of biological role, part of an export system, which is required for biosynthesis and secretion of siderophores. This Mycobacterium tuberculosis (strain CDC 1551 / Oshkosh) protein is Siderophore exporter MmpL5 (mmpL5).